Here is a 143-residue protein sequence, read N- to C-terminus: Probable FAD-linked sulfhydryl oxidase R368 (143 aa).

The 95-residue stretch at 10–104 (GWTFSHAVAL…YPEAIEAIEK (95 aa)) folds into the ERV/ALR sulfhydryl oxidase domain. A disulfide bond links cysteine 46 and cysteine 49. A helical transmembrane segment spans residues 117 to 137 (FFIILIIIGIIVIIYLMYIVF).

FAD is required as a cofactor.

Its subcellular location is the membrane. It carries out the reaction 2 R'C(R)SH + O2 = R'C(R)S-S(R)CR' + H2O2. FAD-dependent sulfhydryl oxidase that catalyzes disulfide bond formation. The chain is Probable FAD-linked sulfhydryl oxidase R368 from Acanthamoeba polyphaga mimivirus (APMV).